A 535-amino-acid polypeptide reads, in one-letter code: Keratin, type II cytoskeletal 79 (535 aa).

Polar residues-rich tracts occupy residues 1–12 (MRSSVSRQTYST) and 28–38 (QARTSFSSVTV). The tract at residues 1–53 (MRSSVSRQTYSTKGAFSSSSASGGGGSQARTSFSSVTVSRNSGRGGGPRCGPS) is disordered. Residues 1 to 141 (MRSSVSRQTY…DPEIQRVRTE (141 aa)) are head. Positions 43 to 53 (GRGGGPRCGPS) are enriched in gly residues. The interval 142–177 (EREQIKTLNNKFASFIDKVRFLEQQNKVLETKWALL) is coil 1A. The IF rod domain occupies 142–457 (EREQIKTLNN…KLLESEESRM (316 aa)). Residues 178–198 (QEQGQKSGVTRNNLEPLFEHF) are linker 1. The interval 199–290 (INNLRGKLDN…HLYEEELSQV (92 aa)) is coil 1B. Residues 291-314 (QTHVSDTSVILSMDNNRNLDLDSI) form a linker 12 region. The tract at residues 315 to 453 (IAEVKAQYEQ…ATYRKLLESE (139 aa)) is coil 2. A tail region spans residues 454 to 535 (ESRMSGECPS…TTVKTSSRRY (82 aa)).

The protein belongs to the intermediate filament family. In terms of assembly, heterotetramer of two type I and two type II keratins.

The sequence is that of Keratin, type II cytoskeletal 79 (KRT79) from Bos taurus (Bovine).